Reading from the N-terminus, the 159-residue chain is MSQVILDLQIASEQAQGLPEEKDFQRWLEGVLPQFQEVSEVTIRIVDEAESRDLNNTYRGKDKPTNVLSFPFEAPPEVELPLLGDLIICRQVVEREAVEQEKTVEEHWAHMVVHGSLHLLGYDHIEDSEAEEMEALETEIMQSMGYADPYLAEKDGLTE.

Zn(2+)-binding residues include His114, His118, and His124.

Belongs to the endoribonuclease YbeY family. Zn(2+) is required as a cofactor.

Its subcellular location is the cytoplasm. In terms of biological role, single strand-specific metallo-endoribonuclease involved in late-stage 70S ribosome quality control and in maturation of the 3' terminus of the 16S rRNA. The chain is Endoribonuclease YbeY from Pectobacterium atrosepticum (strain SCRI 1043 / ATCC BAA-672) (Erwinia carotovora subsp. atroseptica).